The chain runs to 308 residues: Nodulation protein D 1 (308 aa).

An HTH lysR-type domain is found at 6–63 (LDLNLLVALDALMTERNLTAAARSINLSQPAMSAAVGRLRVYFEDELFTMNGRELVLT). The H-T-H motif DNA-binding region spans 23–42 (LTAAARSINLSQPAMSAAVG).

Belongs to the LysR transcriptional regulatory family.

NodD regulates the expression of the nodABCFE genes which encode other nodulation proteins. NodD is also a negative regulator of its own expression. Binds flavonoids as inducers. In Rhizobium tropici, this protein is Nodulation protein D 1 (nodD1).